The sequence spans 1437 residues: MSLSENEQFRVLLEQIDLLDNAELKDGSIKDLTVHSNSKRWTFSFEFNDILPLQIFVEFHHQLVNTFGSIAQIDFSIDTINKNNVATHATDYWDWIIKNSGIQSSLLQVLCDKSIPEFKDGQLVVKVDNQITKNFLNDDVLQTLSNTYQKVGFGPIKIKPTIDDNTAQERLQAYHEEKIKRDQAIVQKATEAIKKAESKKKASDKAMPEFNGKVQMGKPINGKDNIVQLRDITQEERSVSIEGYIFDAEVKTLRSERQLLIFKVTDYTSSITIKKFSRNEADEQLFSAIKKGLWVRVRGSIQEDSFMKDLTMNAYDIMEVDHADRQDTATDKRVELHLHTNMSTMDATNGISDLVGQAAKWGHPAVAVTDHAGLQAFPEAHAAGKKSGIKTLFGVEANLVDDGVPIGYNSEHCPLKGGKYVIFDVETTGLSAIYDKVIELSAVKMENGNVIDQFEEFIDPGFPLSETTINLTSITDEMVRGSMSEKEVFTKFREFYEDAIIVGHNVTFDIGFMNTGYLRHGMEEIKNPIIDTLTLARFLYPTLKGYRLNTLAKKFGVALEHHHRAIYDSETTGHLCYLFLKDAEERYGIEYHDQLNDHMTENEAYKHARPSHAILIAKTQAGLKNLFKLVSMSNVKYYYRVPRIPRSELEKLREGIIVGSACSSGDVFTAMMQKGYADARRKAKFYDYLEVMPKPVYQPLIEQELVSDNKKLEEIIANIVKLGEDLDIPVVATGDVHYLNPQDYIYRKILINSQGGANPLNRSELPDVHFRTTDEMLEDFSFLGPEVAHKIVVENSNKIADSVDDGISPVKDKLYTPKMPGAEDRIKQLSMDRAHALYGEVLPEIVQERLDKELTSIIGNGFSVIYLIAQRLVHKSNKDGYLVGSRGSVGSSFVATMSGITEVNPLPPHYRCPKCQYSFFYTKGEYGSGYDLPDKECPECGTWMIGDGQDIPFETFLGFKGDKVPDIDLNFSGDYQPIAHNYMQVLFGKDNVFRAGTIGTVADKTAFGYVKAYERDTNQHLRGAEIERLAKGATGVKRTTGQHPAGILIVPDYMDVYDFSPIQYPADDQTAAWETTHFDFHSIHDNILKMDILGHDDPTMIRKLQDLSGIDPETIPTDDPGVMKIFSGPEVLGVDENQIQSKTGTLGIPEFGTRFVRGMLEETHPTSYSELLQISGLSHGTDVWLGNAEELIKAGTVTLKEVIGCRDNIMMDLIHYGLDSQSSFQIMESVRKGKGIPEGYEDKMRAANVPDWYIESCGKIKYMFPRAHASAYVLMALRIAYFKVYYPLVYYAAYFTVRADDFDIVSMARGKESLKNRMQEINDKGNDASTKEKNLLTVLELANEMLERGFEFKMIDIEKSDAEEWLIEGKSLIAPFNALPGLGLNVAKQIVAARADKPFLSKEDLSKRGHVSQTLIDFMTENNVLSELPDENQLSLF.

In terms of domain architecture, Exonuclease spans 420-576 (YVIFDVETTG…YDSETTGHLC (157 aa)).

Belongs to the DNA polymerase type-C family. PolC subfamily.

It is found in the cytoplasm. It catalyses the reaction DNA(n) + a 2'-deoxyribonucleoside 5'-triphosphate = DNA(n+1) + diphosphate. Its function is as follows. Required for replicative DNA synthesis. This DNA polymerase also exhibits 3' to 5' exonuclease activity. In Pediococcus pentosaceus (strain ATCC 25745 / CCUG 21536 / LMG 10740 / 183-1w), this protein is DNA polymerase III PolC-type.